The sequence spans 63 residues: Synergistic-type venom protein C9S3, chain 2 (63 aa).

3 disulfides stabilise this stretch: Cys3–Cys24, Cys17–Cys42, and Cys46–Cys57.

Belongs to the three-finger toxin family. Short-chain subfamily. Aminergic toxin sub-subfamily. As to quaternary structure, heterodimer of C9S3 chain 1 (AC P01408) and chain 2, linked by at least two disulfide bonds. As to expression, expressed by the venom gland.

Its subcellular location is the secreted. This protein shows a synergetic toxic effect in that it enhances the toxicity of other D.angusticeps toxins. This chain is Synergistic-type venom protein C9S3, chain 2, found in Dendroaspis angusticeps (Eastern green mamba).